Here is a 232-residue protein sequence, read N- to C-terminus: Small ribosomal subunit protein uS3 (232 aa).

A KH type-2 domain is found at 39-107 (VRRFLEQRLK…PVHVNIEEVR (69 aa)).

It belongs to the universal ribosomal protein uS3 family. Part of the 30S ribosomal subunit. Forms a tight complex with proteins S10 and S14.

Functionally, binds the lower part of the 30S subunit head. Binds mRNA in the 70S ribosome, positioning it for translation. The chain is Small ribosomal subunit protein uS3 from Chromohalobacter salexigens (strain ATCC BAA-138 / DSM 3043 / CIP 106854 / NCIMB 13768 / 1H11).